The following is a 219-amino-acid chain: 2-hydroxy-3-keto-5-methylthiopentenyl-1-phosphate phosphatase (219 aa).

It belongs to the HAD-like hydrolase superfamily. MtnX family.

The catalysed reaction is 2-hydroxy-5-methylsulfanyl-3-oxopent-1-enyl phosphate + H2O = 1,2-dihydroxy-5-(methylsulfanyl)pent-1-en-3-one + phosphate. It functions in the pathway amino-acid biosynthesis; L-methionine biosynthesis via salvage pathway; L-methionine from S-methyl-5-thio-alpha-D-ribose 1-phosphate: step 4/6. Its function is as follows. Dephosphorylates 2-hydroxy-3-keto-5-methylthiopentenyl-1-phosphate (HK-MTPenyl-1-P) yielding 1,2-dihydroxy-3-keto-5-methylthiopentene (DHK-MTPene). In Bacillus cereus (strain ATCC 14579 / DSM 31 / CCUG 7414 / JCM 2152 / NBRC 15305 / NCIMB 9373 / NCTC 2599 / NRRL B-3711), this protein is 2-hydroxy-3-keto-5-methylthiopentenyl-1-phosphate phosphatase.